The chain runs to 430 residues: Adenylosuccinate synthetase (430 aa).

GTP contacts are provided by residues G12–K18 and G40–T42. D13 (proton acceptor) is an active-site residue. Mg(2+)-binding residues include D13 and G40. Residues D13–K16, N38–H41, T130, R144, Q224, T239, and R303 each bind IMP. H41 acts as the Proton donor in catalysis. T299–R305 is a binding site for substrate. GTP contacts are provided by residues R305, K331–D333, and S413–S415.

Belongs to the adenylosuccinate synthetase family. In terms of assembly, homodimer. Mg(2+) serves as cofactor.

It localises to the cytoplasm. It carries out the reaction IMP + L-aspartate + GTP = N(6)-(1,2-dicarboxyethyl)-AMP + GDP + phosphate + 2 H(+). Its pathway is purine metabolism; AMP biosynthesis via de novo pathway; AMP from IMP: step 1/2. In terms of biological role, plays an important role in the de novo pathway of purine nucleotide biosynthesis. Catalyzes the first committed step in the biosynthesis of AMP from IMP. This chain is Adenylosuccinate synthetase, found in Pelagibacter ubique (strain HTCC1062).